The primary structure comprises 497 residues: Cysteine--tRNA ligase (497 aa).

Cys34 is a Zn(2+) binding site. Residues 36 to 46 carry the 'HIGH' region motif; that stretch reads PTVYDFAHIGN. Zn(2+)-binding residues include Cys243, His268, and Glu272. Residues 301 to 305 carry the 'KMSKS' region motif; that stretch reads KMAKS. Lys304 is a binding site for ATP. Residues 478–497 are disordered; sequence LMDYKDPETGERRTKWEVKR. A compositionally biased stretch (basic and acidic residues) spans 480–497; the sequence is DYKDPETGERRTKWEVKR.

It belongs to the class-I aminoacyl-tRNA synthetase family. As to quaternary structure, monomer. It depends on Zn(2+) as a cofactor.

Its subcellular location is the cytoplasm. The enzyme catalyses tRNA(Cys) + L-cysteine + ATP = L-cysteinyl-tRNA(Cys) + AMP + diphosphate. The sequence is that of Cysteine--tRNA ligase from Chelativorans sp. (strain BNC1).